The sequence spans 329 residues: UDP-glucose 4-epimerase (329 aa).

NAD(+) contacts are provided by residues 11 to 12 (YV), 31 to 36 (DNFSTG), 51 to 52 (DV), 71 to 75 (FAARS), T115, Y139, K143, and F167. Positions 115 and 139 each coordinate substrate. Y139 functions as the Proton acceptor in the catalytic mechanism. Residues N168, 185–186 (HL), 202–204 (FMF), R217, and 277–280 (RAGD) each bind substrate.

The protein belongs to the NAD(P)-dependent epimerase/dehydratase family. In terms of assembly, homodimer. Requires NAD(+) as cofactor.

The catalysed reaction is UDP-alpha-D-glucose = UDP-alpha-D-galactose. The protein operates within carbohydrate metabolism; galactose metabolism. In terms of biological role, involved in the metabolism of galactose. Catalyzes the conversion of UDP-galactose (UDP-Gal) to UDP-glucose (UDP-Glc) through a mechanism involving the transient reduction of NAD. This chain is UDP-glucose 4-epimerase (galE), found in Corynebacterium glutamicum (strain ATCC 13032 / DSM 20300 / JCM 1318 / BCRC 11384 / CCUG 27702 / LMG 3730 / NBRC 12168 / NCIMB 10025 / NRRL B-2784 / 534).